The primary structure comprises 252 residues: tRNA pseudouridine synthase A (252 aa).

Asp-52 serves as the catalytic Nucleophile. Tyr-112 provides a ligand contact to substrate.

The protein belongs to the tRNA pseudouridine synthase TruA family. Homodimer.

The catalysed reaction is uridine(38/39/40) in tRNA = pseudouridine(38/39/40) in tRNA. Its function is as follows. Formation of pseudouridine at positions 38, 39 and 40 in the anticodon stem and loop of transfer RNAs. In Porphyromonas gingivalis (strain ATCC 33277 / DSM 20709 / CIP 103683 / JCM 12257 / NCTC 11834 / 2561), this protein is tRNA pseudouridine synthase A.